The sequence spans 189 residues: Ribonuclease HII (189 aa).

The RNase H type-2 domain occupies methionine 1 to lysine 189. A divalent metal cation contacts are provided by aspartate 6, glutamate 7, and aspartate 98.

This sequence belongs to the RNase HII family. Requires Mn(2+) as cofactor. Mg(2+) is required as a cofactor.

The protein resides in the cytoplasm. The catalysed reaction is Endonucleolytic cleavage to 5'-phosphomonoester.. Its function is as follows. Endonuclease that specifically degrades the RNA of RNA-DNA hybrids. The protein is Ribonuclease HII of Dichelobacter nodosus (strain VCS1703A).